Reading from the N-terminus, the 2238-residue chain is Golgin subfamily A member 4 (2238 aa).

The segment at 1-90 (MFKKLKQKIS…QTFAQKLQLR (90 aa)) is disordered. Position 10 is a phosphoserine (serine 10). The span at 12-41 (EQQQLQQALAPAQASSSSSTPTRTRSRTSS) shows a compositional bias: low complexity. Threonine 39 carries the phosphothreonine modification. Position 41 is a phosphoserine (serine 41). Composition is skewed to polar residues over residues 52 to 62 (NRENASTQATK) and 73 to 85 (SPSQ…TFAQ). Residues serine 93 and serine 100 each carry the phosphoserine modification. 3 disordered regions span residues 132–154 (AAAF…NSDG), 1695–1744 (LKER…SQDC), and 1770–1789 (LEQG…HRAL). The segment at 154 to 224 (GLSREQLLQR…EELQMDQQAK (71 aa)) is interaction with MACF1. Positions 156–2161 (SREQLLQRLR…RYEKNACAAT (2006 aa)) form a coiled coil. The segment covering 1695–1711 (LKEREKQVHSLEDKLKN) has biased composition (basic and acidic residues). Positions 2178-2225 (LFGEPTEFEYLRKVMFEYMMGRETKTMAKVITTVLKFPDDQAQKILER) constitute a GRIP domain.

In terms of assembly, homodimer. Interacts with GTP-bound ARL1 and ARL3. Interacts with MACF1. Directly interacts with TBC1D23. Interacts with FAM91A1; this interaction may be mediated by TBC1D23. Ubiquitous. Highly expressed in oligodendrocyte precursors, particularly at a stage just prior to myelination.

Its subcellular location is the cytoplasm. The protein localises to the golgi apparatus membrane. It localises to the golgi apparatus. The protein resides in the trans-Golgi network membrane. In terms of biological role, involved in vesicular trafficking at the Golgi apparatus level. May play a role in delivery of transport vesicles containing GPI-linked proteins from the trans-Golgi network through its interaction with MACF1. Involved in endosome-to-Golgi trafficking. In Mus musculus (Mouse), this protein is Golgin subfamily A member 4 (Golga4).